Reading from the N-terminus, the 299-residue chain is Small ribosomal subunit biogenesis GTPase RsgA (299 aa).

In terms of domain architecture, CP-type G spans 64–225 (KNEMIRPPVA…VGDTPGFSSL (162 aa)). GTP-binding positions include 113-116 (TKTD) and 168-176 (GQTGAGKST). 4 residues coordinate Zn(2+): Cys-249, Cys-254, His-256, and Cys-262.

It belongs to the TRAFAC class YlqF/YawG GTPase family. RsgA subfamily. As to quaternary structure, monomer. Associates with 30S ribosomal subunit, binds 16S rRNA. The cofactor is Zn(2+).

The protein resides in the cytoplasm. In terms of biological role, one of several proteins that assist in the late maturation steps of the functional core of the 30S ribosomal subunit. Helps release RbfA from mature subunits. May play a role in the assembly of ribosomal proteins into the subunit. Circularly permuted GTPase that catalyzes slow GTP hydrolysis, GTPase activity is stimulated by the 30S ribosomal subunit. The protein is Small ribosomal subunit biogenesis GTPase RsgA of Latilactobacillus sakei subsp. sakei (strain 23K) (Lactobacillus sakei subsp. sakei).